The sequence spans 757 residues: POU domain, class 2, transcription factor 1 (757 aa).

Disordered stretches follow at residues 1 to 43 (MKLH…QTNG), 271 to 295 (AATPVQQLPQSQTTPKRIDTPSLEE), 375 to 398 (SLSNQSVLNSPGHGMEGLNRRRKK), and 532 to 574 (VSSV…TSPL). Composition is skewed to polar residues over residues 19-43 (RMNNPSETSKSSESGDGNTGTQTNG) and 275-285 (VQQLPQSQTTP). Residues 294–368 (EEPSDLEELE…LLEKWLNDAE (75 aa)) form the POU-specific domain. Residues 395 to 454 (RRKKRTSIETNIRVALEKSFLENQKPTSEEITMIADQLNMEKEVIRVWFCNRRQKEKRIN) constitute a DNA-binding region (homeobox).

Belongs to the POU transcription factor family. Class-2 subfamily.

The protein resides in the cytoplasm. The protein localises to the nucleus. Transcription factor that binds to the octamer motif (5'-ATTTGCAT-3') and activates the promoters of the genes for some small nuclear RNAs (snRNA) and histone H2B. Acts downstream of Notch signaling during radial glia formation. Regulates apoptosis, possibly via an FGF-signaling pathway. The polypeptide is POU domain, class 2, transcription factor 1 (Xenopus tropicalis (Western clawed frog)).